The sequence spans 1405 residues: DNA-directed RNA polymerase subunit beta' (1405 aa).

Zn(2+)-binding residues include cysteine 70, cysteine 72, cysteine 85, and cysteine 88. Mg(2+) is bound by residues aspartate 460, aspartate 462, and aspartate 464. Cysteine 814, cysteine 888, cysteine 895, and cysteine 898 together coordinate Zn(2+).

This sequence belongs to the RNA polymerase beta' chain family. As to quaternary structure, the RNAP catalytic core consists of 2 alpha, 1 beta, 1 beta' and 1 omega subunit. When a sigma factor is associated with the core the holoenzyme is formed, which can initiate transcription. It depends on Mg(2+) as a cofactor. Zn(2+) serves as cofactor.

It catalyses the reaction RNA(n) + a ribonucleoside 5'-triphosphate = RNA(n+1) + diphosphate. Functionally, DNA-dependent RNA polymerase catalyzes the transcription of DNA into RNA using the four ribonucleoside triphosphates as substrates. The sequence is that of DNA-directed RNA polymerase subunit beta' from Shewanella sp. (strain ANA-3).